Consider the following 562-residue polypeptide: Dihydroxy-acid dehydratase (562 aa).

A Mg(2+)-binding site is contributed by Asp80. Cys121 lines the [2Fe-2S] cluster pocket. Mg(2+)-binding residues include Asp122 and Lys123. Lys123 is subject to N6-carboxylysine. Residue Cys194 coordinates [2Fe-2S] cluster. Mg(2+) is bound at residue Glu446. The active-site Proton acceptor is the Ser472.

The protein belongs to the IlvD/Edd family. Homodimer. [2Fe-2S] cluster is required as a cofactor. Requires Mg(2+) as cofactor.

It carries out the reaction (2R)-2,3-dihydroxy-3-methylbutanoate = 3-methyl-2-oxobutanoate + H2O. It catalyses the reaction (2R,3R)-2,3-dihydroxy-3-methylpentanoate = (S)-3-methyl-2-oxopentanoate + H2O. Its pathway is amino-acid biosynthesis; L-isoleucine biosynthesis; L-isoleucine from 2-oxobutanoate: step 3/4. It participates in amino-acid biosynthesis; L-valine biosynthesis; L-valine from pyruvate: step 3/4. Functionally, functions in the biosynthesis of branched-chain amino acids. Catalyzes the dehydration of (2R,3R)-2,3-dihydroxy-3-methylpentanoate (2,3-dihydroxy-3-methylvalerate) into 2-oxo-3-methylpentanoate (2-oxo-3-methylvalerate) and of (2R)-2,3-dihydroxy-3-methylbutanoate (2,3-dihydroxyisovalerate) into 2-oxo-3-methylbutanoate (2-oxoisovalerate), the penultimate precursor to L-isoleucine and L-valine, respectively. This Staphylococcus epidermidis (strain ATCC 35984 / DSM 28319 / BCRC 17069 / CCUG 31568 / BM 3577 / RP62A) protein is Dihydroxy-acid dehydratase.